The chain runs to 374 residues: uncharacterized protein (374 aa).

The protein belongs to the mimivirus R640 family.

It localises to the virion. This is an uncharacterized protein from Acanthamoeba polyphaga (Amoeba).